The chain runs to 1131 residues: Phytochrome B1 (1131 aa).

Positions 1–11 (MASGSRTKHSY) are enriched in basic residues. A disordered region spans residues 1 to 26 (MASGSRTKHSYHNSSQGQAQSSGTSN). Positions 14–25 (SSQGQAQSSGTS) are enriched in low complexity. In terms of domain architecture, GAF spans 229 to 408 (DIKLLCDTVV…AFGLQLNMEL (180 aa)). Position 334 (Cys334) interacts with phytochromobilin. PAS domains are found at residues 622 to 693 (VARE…LRGV) and 756 to 808 (DYKA…GEIF). Residues 904 to 1124 (YICQEVKSPL…MIILDLPMTR (221 aa)) enclose the Histidine kinase domain.

Belongs to the phytochrome family. As to quaternary structure, homodimer. Post-translationally, contains one covalently linked phytochromobilin chromophore.

Regulatory photoreceptor which exists in two forms that are reversibly interconvertible by light: the Pr form that absorbs maximally in the red region of the spectrum and the Pfr form that absorbs maximally in the far-red region. Photoconversion of Pr to Pfr induces an array of morphogenic responses, whereas reconversion of Pfr to Pr cancels the induction of those responses. Pfr controls the expression of a number of nuclear genes including those encoding the small subunit of ribulose-bisphosphate carboxylase, chlorophyll A/B binding protein, protochlorophyllide reductase, rRNA, etc. It also controls the expression of its own gene(s) in a negative feedback fashion. This is Phytochrome B1 from Solanum lycopersicum (Tomato).